A 343-amino-acid polypeptide reads, in one-letter code: Uroporphyrinogen decarboxylase (343 aa).

Residues 23-27 (RQAGR), aspartate 73, tyrosine 150, serine 205, and histidine 322 each bind substrate.

Belongs to the uroporphyrinogen decarboxylase family. Homodimer.

The protein localises to the cytoplasm. It carries out the reaction uroporphyrinogen III + 4 H(+) = coproporphyrinogen III + 4 CO2. Its pathway is porphyrin-containing compound metabolism; protoporphyrin-IX biosynthesis; coproporphyrinogen-III from 5-aminolevulinate: step 4/4. In terms of biological role, catalyzes the decarboxylation of four acetate groups of uroporphyrinogen-III to yield coproporphyrinogen-III. The chain is Uroporphyrinogen decarboxylase from Cereibacter sphaeroides (strain KD131 / KCTC 12085) (Rhodobacter sphaeroides).